A 404-amino-acid chain; its full sequence is Argininosuccinate synthase (404 aa).

ATP contacts are provided by residues 10 to 18 (AYSGGLDTS) and Ala-37. L-citrulline-binding residues include Tyr-90 and Ser-95. Gly-120 lines the ATP pocket. L-aspartate contacts are provided by Thr-122, Asn-126, and Asp-127. Asn-126 provides a ligand contact to L-citrulline. L-citrulline is bound by residues Arg-130, Ser-180, Ser-189, Glu-265, and Tyr-277.

Belongs to the argininosuccinate synthase family. Type 1 subfamily. Homotetramer.

It is found in the cytoplasm. It catalyses the reaction L-citrulline + L-aspartate + ATP = 2-(N(omega)-L-arginino)succinate + AMP + diphosphate + H(+). The protein operates within amino-acid biosynthesis; L-arginine biosynthesis; L-arginine from L-ornithine and carbamoyl phosphate: step 2/3. The sequence is that of Argininosuccinate synthase from Helicobacter hepaticus (strain ATCC 51449 / 3B1).